Reading from the N-terminus, the 161-residue chain is Nucleotide-binding protein BMASAVP1_A0673 (161 aa).

This sequence belongs to the YajQ family.

In terms of biological role, nucleotide-binding protein. The sequence is that of Nucleotide-binding protein BMASAVP1_A0673 from Burkholderia mallei (strain SAVP1).